The sequence spans 299 residues: Probable lipid kinase YegS (299 aa).

One can recognise a DAGKc domain in the interval 2-133 (AEFPASLLIL…IDMAQVNKQT (132 aa)). Residues threonine 40, 66–72 (GDGTINE), and threonine 95 contribute to the ATP site. Mg(2+) contacts are provided by leucine 215, aspartate 218, and leucine 220. Glutamate 271 functions as the Proton acceptor in the catalytic mechanism.

Belongs to the diacylglycerol/lipid kinase family. YegS lipid kinase subfamily. Mg(2+) serves as cofactor. Ca(2+) is required as a cofactor.

It localises to the cytoplasm. In terms of biological role, probably phosphorylates lipids; the in vivo substrate is unknown. This Escherichia coli O17:K52:H18 (strain UMN026 / ExPEC) protein is Probable lipid kinase YegS.